The sequence spans 180 residues: CASP-like protein 2D1 (180 aa).

At 1 to 7 the chain is on the cytoplasmic side; sequence MAASGLK. Residues 8–28 form a helical membrane-spanning segment; sequence VPEMALRVCVVPLALASLWEM. Over 29–48 the chain is Extracellular; the sequence is ATNAQADDTYGEVKFSDLSG. A helical transmembrane segment spans residues 49 to 69; it reads FSYLVGVNAVTAAYALVSILL. The Cytoplasmic segment spans residues 70–79; it reads SSLKPLARYD. Residues 80 to 100 form a helical membrane-spanning segment; it reads WVILVMDQASAYLLVTSASAA. The Extracellular segment spans residues 101–129; sequence AELLQLARRGDREVSWGEVCSYFGRFCGK. Residues 130-150 form a helical membrane-spanning segment; that stretch reads ATVSLALHAAALACFVALALV. Residues 151–180 are Cytoplasmic-facing; it reads SAFRVLSTTGSSCHPPKHAQAQEHEQGRYN. The segment at 161 to 180 is disordered; it reads SSCHPPKHAQAQEHEQGRYN. A compositionally biased stretch (basic and acidic residues) spans 170-180; that stretch reads QAQEHEQGRYN.

Belongs to the Casparian strip membrane proteins (CASP) family. In terms of assembly, homodimer and heterodimers.

It is found in the cell membrane. This is CASP-like protein 2D1 from Sorghum bicolor (Sorghum).